The primary structure comprises 99 residues: Large ribosomal subunit protein uL23 (99 aa).

It belongs to the universal ribosomal protein uL23 family. Part of the 50S ribosomal subunit. Contacts protein L29, and trigger factor when it is bound to the ribosome.

Functionally, one of the early assembly proteins it binds 23S rRNA. One of the proteins that surrounds the polypeptide exit tunnel on the outside of the ribosome. Forms the main docking site for trigger factor binding to the ribosome. This chain is Large ribosomal subunit protein uL23, found in Haemophilus influenzae (strain 86-028NP).